The chain runs to 231 residues: tRNA (guanine-N(1)-)-methyltransferase (231 aa).

Gly112 contributes to the S-adenosyl-L-methionine binding site.

This sequence belongs to the RNA methyltransferase TrmD family. Homodimer.

The protein resides in the cytoplasm. The catalysed reaction is guanosine(37) in tRNA + S-adenosyl-L-methionine = N(1)-methylguanosine(37) in tRNA + S-adenosyl-L-homocysteine + H(+). Functionally, specifically methylates guanosine-37 in various tRNAs. The chain is tRNA (guanine-N(1)-)-methyltransferase from Chlorobium chlorochromatii (strain CaD3).